The following is a 203-amino-acid chain: Ras-related protein Rab-7a (203 aa).

GTP is bound by residues 15 to 22, 34 to 40, 63 to 67, 125 to 128, and 157 to 158; these read GDSGVGKT, SNQYKAT, DTAGQ, NKID, and AK. Positions 37–45 match the Effector region motif; sequence YKATIGADF. Residues cysteine 202 and cysteine 203 are each lipidated (S-geranylgeranyl cysteine).

It belongs to the small GTPase superfamily. Rab family.

Its subcellular location is the late endosome membrane. The protein localises to the lysosome membrane. It localises to the cytoplasmic vesicle. It is found in the autophagosome membrane. The protein resides in the lipid droplet. It catalyses the reaction GTP + H2O = GDP + phosphate + H(+). Functionally, small GTPase which cycles between active GTP-bound and inactive GDP-bound states. In its active state, binds to a variety of effector proteins playing a key role in the regulation of endo-lysosomal trafficking. Governs early-to-late endosomal maturation, microtubule minus-end as well as plus-end directed endosomal migration and positioning, and endosome-lysosome transport through different protein-protein interaction cascades. Involved in lipophagy, a cytosolic lipase-independent autophagic pathway. This is Ras-related protein Rab-7a (rab7A) from Dictyostelium discoideum (Social amoeba).